A 360-amino-acid chain; its full sequence is Probable protein phosphatase 2C 54 (360 aa).

Residues 1 to 39 (MCVEESEGAERLDFGEPAAAAADAGKSKSKSPDELPSPR) are disordered. Residues 65–325 (RSGDWSDIGG…DNLTAVLVSF (261 aa)) form the PPM-type phosphatase domain. Residues Asp109, Gly110, Asp273, and Asp316 each contribute to the Mn(2+) site.

It belongs to the PP2C family. Mg(2+) serves as cofactor. The cofactor is Mn(2+).

It carries out the reaction O-phospho-L-seryl-[protein] + H2O = L-seryl-[protein] + phosphate. The catalysed reaction is O-phospho-L-threonyl-[protein] + H2O = L-threonyl-[protein] + phosphate. The polypeptide is Probable protein phosphatase 2C 54 (Oryza sativa subsp. japonica (Rice)).